Consider the following 165-residue polypeptide: Glycine cleavage system H protein, mitochondrial (165 aa).

The transit peptide at 1–34 directs the protein to the mitochondrion; the sequence is MALRMWASSTANALKLSSSSRLHLSPTFSISRCF. The 83-residue stretch at 56-138 folds into the Lipoyl-binding domain; it reads VATIGITDHA…YEDGWMIKIK (83 aa). Position 97 is an N6-lipoyllysine (K97).

This sequence belongs to the GcvH family. The glycine cleavage system is composed of four proteins: P, T, L and H. (R)-lipoate is required as a cofactor.

Its subcellular location is the mitochondrion. Its function is as follows. The glycine cleavage system catalyzes the degradation of glycine. The H protein shuttles the methylamine group of glycine from the P protein to the T protein. In Pisum sativum (Garden pea), this protein is Glycine cleavage system H protein, mitochondrial (GDCSH).